The sequence spans 268 residues: Glucosamine-6-phosphate deaminase (268 aa).

The active-site Proton acceptor; for enolization step is the Asp67. The For ring-opening step role is filled by Asn137. His139 serves as the catalytic Proton acceptor; for ring-opening step. Residue Glu144 is the For ring-opening step of the active site.

This sequence belongs to the glucosamine/galactosamine-6-phosphate isomerase family. NagB subfamily. As to quaternary structure, homohexamer.

It carries out the reaction alpha-D-glucosamine 6-phosphate + H2O = beta-D-fructose 6-phosphate + NH4(+). It participates in amino-sugar metabolism; N-acetylneuraminate degradation; D-fructose 6-phosphate from N-acetylneuraminate: step 5/5. Its function is as follows. Catalyzes the reversible isomerization-deamination of glucosamine 6-phosphate (GlcN6P) to form fructose 6-phosphate (Fru6P) and ammonium ion. The chain is Glucosamine-6-phosphate deaminase from Colwellia psychrerythraea (strain 34H / ATCC BAA-681) (Vibrio psychroerythus).